A 957-amino-acid chain; its full sequence is ERC protein 2 (957 aa).

Residues 1 to 13 (MYGSARTISNPEG) are compositionally biased toward polar residues. The interval 1–44 (MYGSARTISNPEGSPSRSPRLPRSPRLGHRRTSSGGGGGTGKTL) is disordered. Residues 14 to 25 (SPSRSPRLPRSP) show a composition bias toward low complexity. Residues Ser65 and Ser666 each carry the phosphoserine modification. The stretch at 140–917 (RQVRDSTMLD…RMKLMADNYD (778 aa)) forms a coiled coil. The involved in binding to RIMS1 stretch occupies residues 760 to 957 (DQNKKVANLK…DQDDEEGIWA (198 aa)). The segment at 918–957 (DDHHHYHHHHHHHHHRSPGRSQHSNHRPSPDQDDEEGIWA) is disordered. The span at 922 to 943 (HYHHHHHHHHHRSPGRSQHSNH) shows a compositional bias: basic residues. Over residues 948 to 957 (DQDDEEGIWA) the composition is skewed to acidic residues.

Interacts with BSN, ERC1, PPFIA1, PPFIA2, PPFIA3 and PPFIA4. Interacts through its C-terminus with the PDZ domain of RIMS1. Part of a complex consisting of ERC2, RIMS1 and UNC13A. Predominantly expressed in brain, including hippocampus, cortex, cerebellum, amygdala and olfactory bulb.

Its subcellular location is the cytoplasm. The protein localises to the synapse. It is found in the presynaptic active zone. The protein resides in the cytoskeleton. Thought to be involved in the organization of the cytomatrix at the nerve terminals active zone (CAZ) which regulates neurotransmitter release. Seems to act together with BSN. May recruit liprin-alpha proteins to the CAZ. The chain is ERC protein 2 (Erc2) from Rattus norvegicus (Rat).